The chain runs to 279 residues: Protein ABIL4 (279 aa).

2 disordered regions span residues Val-192–Phe-211 and Leu-219–Arg-241. Residues Asn-194–Pro-208 show a composition bias toward polar residues. Residues Leu-219–Gln-228 show a composition bias toward low complexity.

This sequence belongs to the ABI family. As to quaternary structure, binds SCAR.

It localises to the cytoplasm. The protein resides in the cytoskeleton. Its function is as follows. Involved in regulation of actin and microtubule organization. Part of a WAVE complex that activates the Arp2/3 complex. The protein is Protein ABIL4 (ABIL4) of Arabidopsis thaliana (Mouse-ear cress).